A 362-amino-acid polypeptide reads, in one-letter code: Heat-inducible transcription repressor HrcA (362 aa).

This sequence belongs to the HrcA family.

Functionally, negative regulator of class I heat shock genes (grpE-dnaK-dnaJ and groELS operons). Prevents heat-shock induction of these operons. In Rhizobium johnstonii (strain DSM 114642 / LMG 32736 / 3841) (Rhizobium leguminosarum bv. viciae), this protein is Heat-inducible transcription repressor HrcA.